The primary structure comprises 1318 residues: DNA-directed RNA polymerase subunit beta' (1318 aa).

Zn(2+) is bound by residues Cys60, Cys62, Cys75, and Cys78. 3 residues coordinate Mg(2+): Asp535, Asp537, and Asp539. Positions 890, 967, 974, and 977 each coordinate Zn(2+).

The protein belongs to the RNA polymerase beta' chain family. As to quaternary structure, the RNAP catalytic core consists of 2 alpha, 1 beta, 1 beta' and 1 omega subunit. When a sigma factor is associated with the core the holoenzyme is formed, which can initiate transcription. The cofactor is Mg(2+). Zn(2+) is required as a cofactor.

The catalysed reaction is RNA(n) + a ribonucleoside 5'-triphosphate = RNA(n+1) + diphosphate. In terms of biological role, DNA-dependent RNA polymerase catalyzes the transcription of DNA into RNA using the four ribonucleoside triphosphates as substrates. The chain is DNA-directed RNA polymerase subunit beta' from Rhodococcus erythropolis (strain PR4 / NBRC 100887).